The following is a 458-amino-acid chain: Sphingomyelinase DDB_G0288017 (458 aa).

Positions 91–111 (NKKAKSPPPPSSLKQQNLHNN) are disordered. E135 is a Mg(2+) binding site. The active-site Proton acceptor is the H447.

It belongs to the neutral sphingomyelinase family. Requires Mg(2+) as cofactor.

It catalyses the reaction a sphingomyelin + H2O = phosphocholine + an N-acylsphing-4-enine + H(+). Its pathway is lipid metabolism; sphingolipid metabolism. Catalyzes the hydrolysis of sphingomyelin to form ceramide and phosphocholine. The polypeptide is Sphingomyelinase DDB_G0288017 (Dictyostelium discoideum (Social amoeba)).